We begin with the raw amino-acid sequence, 1064 residues long: Carbamoyl phosphate synthase large chain (1064 aa).

A carboxyphosphate synthetic domain region spans residues 1–401 (MPKRNDIKKI…SLLKAVRSLE (401 aa)). ATP-binding residues include Arg129, Arg169, Gly175, Gly176, Glu208, Ile210, Glu215, Gly241, Val242, His243, Gln284, and Glu298. Positions 133-327 (KELCERIGEP…IAKMSAKIAI (195 aa)) constitute an ATP-grasp 1 domain. Gln284, Glu298, and Asn300 together coordinate Mg(2+). Residues Gln284, Glu298, and Asn300 each coordinate Mn(2+). An oligomerization domain region spans residues 402-546 (IGVFHNDLQE…YSTYEWENES (145 aa)). The carbamoyl phosphate synthetic domain stretch occupies residues 547–929 (KRSSKEKIIV…ALYKSFEAAK (383 aa)). The ATP-grasp 2 domain maps to 671–861 (EKALQDLEIP…MAQLATQMIL (191 aa)). ATP is bound by residues Arg707, Ser746, Leu748, Glu752, Gly777, Val778, His779, Ser780, Gln820, and Glu832. Mg(2+) contacts are provided by Gln820, Glu832, and Asn834. 3 residues coordinate Mn(2+): Gln820, Glu832, and Asn834. Positions 930 to 1064 (LHMADYGSVL…QSRSFTTKNI (135 aa)) constitute an MGS-like domain. The segment at 930 to 1064 (LHMADYGSVL…QSRSFTTKNI (135 aa)) is allosteric domain.

This sequence belongs to the CarB family. In terms of assembly, composed of two chains; the small (or glutamine) chain promotes the hydrolysis of glutamine to ammonia, which is used by the large (or ammonia) chain to synthesize carbamoyl phosphate. Tetramer of heterodimers (alpha,beta)4. It depends on Mg(2+) as a cofactor. Requires Mn(2+) as cofactor.

The enzyme catalyses hydrogencarbonate + L-glutamine + 2 ATP + H2O = carbamoyl phosphate + L-glutamate + 2 ADP + phosphate + 2 H(+). It catalyses the reaction hydrogencarbonate + NH4(+) + 2 ATP = carbamoyl phosphate + 2 ADP + phosphate + 2 H(+). The protein operates within amino-acid biosynthesis; L-arginine biosynthesis; carbamoyl phosphate from bicarbonate: step 1/1. It functions in the pathway pyrimidine metabolism; UMP biosynthesis via de novo pathway; (S)-dihydroorotate from bicarbonate: step 1/3. Functionally, large subunit of the glutamine-dependent carbamoyl phosphate synthetase (CPSase). CPSase catalyzes the formation of carbamoyl phosphate from the ammonia moiety of glutamine, carbonate, and phosphate donated by ATP, constituting the first step of 2 biosynthetic pathways, one leading to arginine and/or urea and the other to pyrimidine nucleotides. The large subunit (synthetase) binds the substrates ammonia (free or transferred from glutamine from the small subunit), hydrogencarbonate and ATP and carries out an ATP-coupled ligase reaction, activating hydrogencarbonate by forming carboxy phosphate which reacts with ammonia to form carbamoyl phosphate. The polypeptide is Carbamoyl phosphate synthase large chain (Lactococcus lactis subsp. lactis (strain IL1403) (Streptococcus lactis)).